Consider the following 350-residue polypeptide: UDP-N-acetylenolpyruvoylglucosamine reductase (350 aa).

One can recognise an FAD-binding PCMH-type domain in the interval 24 to 195; sequence HVEATARWLL…VAVEFNLPLL (172 aa). The active site involves Arg-172. The active-site Proton donor is Ser-245. Glu-342 is a catalytic residue.

It belongs to the MurB family. Requires FAD as cofactor.

Its subcellular location is the cytoplasm. The enzyme catalyses UDP-N-acetyl-alpha-D-muramate + NADP(+) = UDP-N-acetyl-3-O-(1-carboxyvinyl)-alpha-D-glucosamine + NADPH + H(+). The protein operates within cell wall biogenesis; peptidoglycan biosynthesis. Functionally, cell wall formation. This chain is UDP-N-acetylenolpyruvoylglucosamine reductase, found in Xanthomonas axonopodis pv. citri (strain 306).